The sequence spans 319 residues: Acetyl-coenzyme A carboxylase carboxyl transferase subunit alpha (319 aa).

The 262-residue stretch at 35-296 (DLEKEIKQLE…KQRLLEQLKE (262 aa)) folds into the CoA carboxyltransferase C-terminal domain.

This sequence belongs to the AccA family. Acetyl-CoA carboxylase is a heterohexamer composed of biotin carboxyl carrier protein (AccB), biotin carboxylase (AccC) and two subunits each of ACCase subunit alpha (AccA) and ACCase subunit beta (AccD).

The protein resides in the cytoplasm. The enzyme catalyses N(6)-carboxybiotinyl-L-lysyl-[protein] + acetyl-CoA = N(6)-biotinyl-L-lysyl-[protein] + malonyl-CoA. It functions in the pathway lipid metabolism; malonyl-CoA biosynthesis; malonyl-CoA from acetyl-CoA: step 1/1. Its function is as follows. Component of the acetyl coenzyme A carboxylase (ACC) complex. First, biotin carboxylase catalyzes the carboxylation of biotin on its carrier protein (BCCP) and then the CO(2) group is transferred by the carboxyltransferase to acetyl-CoA to form malonyl-CoA. The chain is Acetyl-coenzyme A carboxylase carboxyl transferase subunit alpha from Aliivibrio fischeri (strain ATCC 700601 / ES114) (Vibrio fischeri).